We begin with the raw amino-acid sequence, 300 residues long: UPF0282 protein TGAM_0379 (300 aa).

The protein belongs to the UPF0282 family.

The chain is UPF0282 protein TGAM_0379 from Thermococcus gammatolerans (strain DSM 15229 / JCM 11827 / EJ3).